Here is a 169-residue protein sequence, read N- to C-terminus: Allophycocyanin subunit beta-18 (169 aa).

Position 72 is an N4-methylasparagine (N72). C82 is a binding site for (2R,3E)-phycocyanobilin.

Belongs to the phycobiliprotein family. Heterodimer of ApcE and this beta chain. Post-translationally, contains one covalently linked bilin chromophore. The chromophore is added by phycocyanobilin lyase CpcS 1.

It localises to the cellular thylakoid membrane. In terms of biological role, a variant beta-allophycocyanin (AP) which forms a complex with ApcE, a phycobilisome terminal emitter that influences energy transfer to photosystem II. The chain is Allophycocyanin subunit beta-18 (apcF) from Nostoc sp. (strain PCC 7120 / SAG 25.82 / UTEX 2576).